The sequence spans 108 residues: Putative lipid-binding protein AIR1B (108 aa).

Positions 1-23 (MAPRTSLALFVSLNLLFFTCTSA) are cleaved as a signal peptide. 3 disulfides stabilise this stretch: Cys28/Cys55, Cys35/Cys54, and Cys71/Cys107.

This sequence belongs to the plant LTP family. PEARLI1 subfamily.

Its subcellular location is the secreted. This is Putative lipid-binding protein AIR1B (AIR1B) from Arabidopsis thaliana (Mouse-ear cress).